A 394-amino-acid chain; its full sequence is ATP phosphoribosyltransferase regulatory subunit (394 aa).

The protein belongs to the class-II aminoacyl-tRNA synthetase family. HisZ subfamily. As to quaternary structure, heteromultimer composed of HisG and HisZ subunits.

It is found in the cytoplasm. It participates in amino-acid biosynthesis; L-histidine biosynthesis; L-histidine from 5-phospho-alpha-D-ribose 1-diphosphate: step 1/9. In terms of biological role, required for the first step of histidine biosynthesis. May allow the feedback regulation of ATP phosphoribosyltransferase activity by histidine. This is ATP phosphoribosyltransferase regulatory subunit from Geobacillus thermodenitrificans (strain NG80-2).